Consider the following 514-residue polypeptide: MKKKPYQIEIIQKKAPYHPDPTMIFNHLCESRSATLLLETAEVNKKKDLESIMIIDSAIRISSKKNLVKLKPLSINGEEILLALKKRIPKKIEIYEKNKNIILVFPKIEKNLDEDKKLFSLSVFDAFRFMIKIFENKEKKSKAMFFGGLFSYDLSQFFESLPKLKGNQKCSNFCFYLAETLLVLDHQKKTCLIQNSLFTKNANEKKRIKERSIEIEKKLNEKLKSIPKVKITDINLTSNMNNFEYGSIIKKLQKLIQKGEIFQVVPSRKFYLPCPNPLSAYQKLKKSNPSPYMFFMQDKDFTLFGASPESSLKYDEKTRKIELYPIAGTRPRGRTEDGNLDLDLDSRIELEMRTNHKELAEHLMLVDLARNDLARICKPGSRYVSDLVKVDKYSHVMHLVSKVIGELKEGLDALHAYASCMNMGTLTGAPKVRAMQLIAEYEKEKRGSYGGAIGYFTDLGNLDTCITIRSAYVENIATIQAGAGIVYNSIPEDEVNESLNKAQAVINAIKNAHY.

Residues threonine 40 and 291 to 293 each bind L-tryptophan; that span reads PYM. 328-329 is a chorismate binding site; that stretch reads GT. Mg(2+) is bound at residue glutamate 361. Chorismate is bound by residues tyrosine 449, arginine 469, 482 to 484, and glycine 484; that span reads GAG. Glutamate 497 contacts Mg(2+).

This sequence belongs to the anthranilate synthase component I family. In terms of assembly, heterotetramer consisting of two non-identical subunits: a beta subunit (TrpG) and a large alpha subunit (TrpE). It depends on Mg(2+) as a cofactor.

It carries out the reaction chorismate + L-glutamine = anthranilate + pyruvate + L-glutamate + H(+). Its pathway is amino-acid biosynthesis; L-tryptophan biosynthesis; L-tryptophan from chorismate: step 1/5. With respect to regulation, feedback inhibited by tryptophan. Part of a heterotetrameric complex that catalyzes the two-step biosynthesis of anthranilate, an intermediate in the biosynthesis of L-tryptophan. In the first step, the glutamine-binding beta subunit (TrpG) of anthranilate synthase (AS) provides the glutamine amidotransferase activity which generates ammonia as a substrate that, along with chorismate, is used in the second step, catalyzed by the large alpha subunit of AS (TrpE) to produce anthranilate. In the absence of TrpG, TrpE can synthesize anthranilate directly from chorismate and high concentrations of ammonia. The protein is Anthranilate synthase component 1 (trpE) of Buchnera aphidicola subsp. Rhopalosiphum maidis.